The sequence spans 660 residues: Protein FAM161A (660 aa).

Coiled coils occupy residues 93–120 and 296–320; these read EEYF…YQDK and YHDL…ALLA. Positions 341-525 are required for interaction with CFAP418; sequence QLRDFLKYKK…PTVSSRGREQ (185 aa). Glycyl lysine isopeptide (Lys-Gly) (interchain with G-Cter in SUMO2) cross-links involve residues lysine 468 and lysine 484. The stretch at 522 to 552 forms a coiled coil; sequence GREQAVRKSEKERMREYQRELEEREEKLKKR. The segment at 605–660 is disordered; it reads KSVTEDKESFNEEEKIEERENGEENYFIDTNSQDSYKEKDEANEESEEEKSVEESH. A compositionally biased stretch (basic and acidic residues) spans 606-623; the sequence is SVTEDKESFNEEEKIEER. Acidic residues predominate over residues 645 to 660; sequence EANEESEEEKSVEESH.

This sequence belongs to the FAM161 family. As to quaternary structure, interacts (via central region) with CFAP418 (via N-terminus); the interaction is direct. Interacts (via C-terminus) with microtubules. Interacts with LCA5. Interacts with CEP290. Interacts with SDCCAG8. Interacts with FAM161B. Interacts with POC1B. Interacts with CEP78. Forms a microtubule-associated complex with POC5, CETN2 and POC1B. Interacts with CCDC15. In terms of tissue distribution, isoform 1 and isoform 3 are widely expressed with highest levels in retina and testis, with isoform 1 being the most abundant in all tissues tested.

The protein resides in the cytoplasm. The protein localises to the cytoskeleton. It localises to the cilium basal body. Its subcellular location is the cell projection. It is found in the cilium. The protein resides in the microtubule organizing center. The protein localises to the centrosome. It localises to the centriole. In terms of biological role, involved in ciliogenesis. The sequence is that of Protein FAM161A (FAM161A) from Homo sapiens (Human).